A 551-amino-acid polypeptide reads, in one-letter code: Malate synthase, glyoxysomal (551 aa).

Catalysis depends on Arg174, which acts as the Proton acceptor. Asp458 functions as the Proton donor in the catalytic mechanism.

The protein belongs to the malate synthase family.

It localises to the glyoxysome. The catalysed reaction is glyoxylate + acetyl-CoA + H2O = (S)-malate + CoA + H(+). It participates in carbohydrate metabolism; glyoxylate cycle; (S)-malate from isocitrate: step 2/2. The polypeptide is Malate synthase, glyoxysomal (PMS1) (Candida tropicalis (Yeast)).